Consider the following 104-residue polypeptide: Large ribosomal subunit protein bL21 (104 aa).

The span at 81–90 (QGYRRHHGHR) shows a compositional bias: basic residues. Positions 81–104 (QGYRRHHGHRQPYTQVKITGISAG) are disordered.

This sequence belongs to the bacterial ribosomal protein bL21 family. Part of the 50S ribosomal subunit. Contacts protein L20.

This protein binds to 23S rRNA in the presence of protein L20. This is Large ribosomal subunit protein bL21 from Halorhodospira halophila (strain DSM 244 / SL1) (Ectothiorhodospira halophila (strain DSM 244 / SL1)).